The primary structure comprises 492 residues: Adenosylhomocysteinase-like 2 (492 aa).

Residues 43–64 (FTGSSDEEDVSPKDNHQRNSAG) form a disordered region. Positions 192 and 217 each coordinate substrate. 218–220 (SVT) serves as a coordination point for NAD(+). 2 residues coordinate substrate: Lys247 and Asp251. NAD(+) is bound by residues 283–288 (GDVGKG), Glu304, 360–362 (MGH), Asn407, Lys486, 486–490 (KANYY), and Tyr490.

It belongs to the adenosylhomocysteinase family. NAD(+) serves as cofactor.

Its function is as follows. Might play a role in the regulation of methionine metabolism. The chain is Adenosylhomocysteinase-like 2 from Drosophila melanogaster (Fruit fly).